A 313-amino-acid polypeptide reads, in one-letter code: Acetyl-coenzyme A carboxylase carboxyl transferase subunit alpha (313 aa).

A CoA carboxyltransferase C-terminal domain is found at 34–288 (KLKDQRDIAL…KNVVLEAVNE (255 aa)).

Belongs to the AccA family. In terms of assembly, acetyl-CoA carboxylase is a heterohexamer composed of biotin carboxyl carrier protein (AccB), biotin carboxylase (AccC) and two subunits each of ACCase subunit alpha (AccA) and ACCase subunit beta (AccD).

It localises to the cytoplasm. It catalyses the reaction N(6)-carboxybiotinyl-L-lysyl-[protein] + acetyl-CoA = N(6)-biotinyl-L-lysyl-[protein] + malonyl-CoA. It participates in lipid metabolism; malonyl-CoA biosynthesis; malonyl-CoA from acetyl-CoA: step 1/1. Component of the acetyl coenzyme A carboxylase (ACC) complex. First, biotin carboxylase catalyzes the carboxylation of biotin on its carrier protein (BCCP) and then the CO(2) group is transferred by the carboxyltransferase to acetyl-CoA to form malonyl-CoA. The sequence is that of Acetyl-coenzyme A carboxylase carboxyl transferase subunit alpha from Fusobacterium nucleatum subsp. nucleatum (strain ATCC 25586 / DSM 15643 / BCRC 10681 / CIP 101130 / JCM 8532 / KCTC 2640 / LMG 13131 / VPI 4355).